A 378-amino-acid chain; its full sequence is Dual-specificity RNA methyltransferase RlmN (378 aa).

Residue Glu-96 is the Proton acceptor of the active site. The Radical SAM core domain maps to 102–342 (QGGRGTLCVS…VRTTRGDDID (241 aa)). Residues Cys-109 and Cys-345 are joined by a disulfide bond. [4Fe-4S] cluster contacts are provided by Cys-116, Cys-120, and Cys-123. S-adenosyl-L-methionine-binding positions include 170–171 (GE), Ser-202, 224–226 (SLH), and Asn-302. Cys-345 acts as the S-methylcysteine intermediate in catalysis.

It belongs to the radical SAM superfamily. RlmN family. Requires [4Fe-4S] cluster as cofactor.

The protein localises to the cytoplasm. It catalyses the reaction adenosine(2503) in 23S rRNA + 2 reduced [2Fe-2S]-[ferredoxin] + 2 S-adenosyl-L-methionine = 2-methyladenosine(2503) in 23S rRNA + 5'-deoxyadenosine + L-methionine + 2 oxidized [2Fe-2S]-[ferredoxin] + S-adenosyl-L-homocysteine. The catalysed reaction is adenosine(37) in tRNA + 2 reduced [2Fe-2S]-[ferredoxin] + 2 S-adenosyl-L-methionine = 2-methyladenosine(37) in tRNA + 5'-deoxyadenosine + L-methionine + 2 oxidized [2Fe-2S]-[ferredoxin] + S-adenosyl-L-homocysteine. Functionally, specifically methylates position 2 of adenine 2503 in 23S rRNA and position 2 of adenine 37 in tRNAs. m2A2503 modification seems to play a crucial role in the proofreading step occurring at the peptidyl transferase center and thus would serve to optimize ribosomal fidelity. This is Dual-specificity RNA methyltransferase RlmN from Pseudomonas paraeruginosa (strain DSM 24068 / PA7) (Pseudomonas aeruginosa (strain PA7)).